The chain runs to 458 residues: ATP synthase subunit beta (458 aa).

148–155 (GGAGVGKT) is a binding site for ATP.

This sequence belongs to the ATPase alpha/beta chains family. F-type ATPases have 2 components, CF(1) - the catalytic core - and CF(0) - the membrane proton channel. CF(1) has five subunits: alpha(3), beta(3), gamma(1), delta(1), epsilon(1). CF(0) has three main subunits: a(1), b(2) and c(9-12). The alpha and beta chains form an alternating ring which encloses part of the gamma chain. CF(1) is attached to CF(0) by a central stalk formed by the gamma and epsilon chains, while a peripheral stalk is formed by the delta and b chains.

It is found in the cell inner membrane. It carries out the reaction ATP + H2O + 4 H(+)(in) = ADP + phosphate + 5 H(+)(out). Produces ATP from ADP in the presence of a proton gradient across the membrane. The catalytic sites are hosted primarily by the beta subunits. The sequence is that of ATP synthase subunit beta from Pseudomonas fluorescens (strain ATCC BAA-477 / NRRL B-23932 / Pf-5).